The sequence spans 398 residues: 1-deoxy-D-xylulose 5-phosphate reductoisomerase (398 aa).

Residues T10, G11, S12, I13, N38, and N124 each contribute to the NADPH site. A 1-deoxy-D-xylulose 5-phosphate-binding site is contributed by K125. E126 provides a ligand contact to NADPH. Residue D150 participates in Mn(2+) binding. 1-deoxy-D-xylulose 5-phosphate-binding residues include S151, E152, S176, and H199. Residue E152 participates in Mn(2+) binding. Position 205 (G205) interacts with NADPH. Positions 212, 217, 218, and 221 each coordinate 1-deoxy-D-xylulose 5-phosphate. E221 provides a ligand contact to Mn(2+).

The protein belongs to the DXR family. Requires Mg(2+) as cofactor. The cofactor is Mn(2+).

It catalyses the reaction 2-C-methyl-D-erythritol 4-phosphate + NADP(+) = 1-deoxy-D-xylulose 5-phosphate + NADPH + H(+). It functions in the pathway isoprenoid biosynthesis; isopentenyl diphosphate biosynthesis via DXP pathway; isopentenyl diphosphate from 1-deoxy-D-xylulose 5-phosphate: step 1/6. Its function is as follows. Catalyzes the NADPH-dependent rearrangement and reduction of 1-deoxy-D-xylulose-5-phosphate (DXP) to 2-C-methyl-D-erythritol 4-phosphate (MEP). The polypeptide is 1-deoxy-D-xylulose 5-phosphate reductoisomerase (Rippkaea orientalis (strain PCC 8801 / RF-1) (Cyanothece sp. (strain PCC 8801))).